The chain runs to 288 residues: Translocon-associated protein subunit alpha (288 aa).

A signal peptide spans 1-28; the sequence is MFNFGSKILVLFLVAFPCGLISFGRVSA. Residues 29-208 lie on the Lumenal side of the membrane; the sequence is DSESAEDIFP…ELEEGLDGET (180 aa). Residues 34–69 form a disordered region; sequence EDIFPDSTVDEEEEEEEDEVLVEEDQVPGSETEDDI. Residues Asn-137 and Asn-192 are each glycosylated (N-linked (GlcNAc...) asparagine). A helical transmembrane segment spans residues 209–229; the sequence is IFMYIFLTGLVVLAVFGMYQV. At 230–288 the chain is on the cytoplasmic side; sequence LESRTRKRFPVKVETGTGGMNGVDISWIPQETLNIMSKASASPKASPRKRTKRAVGVDQ. The segment at 267–288 is disordered; it reads KASASPKASPRKRTKRAVGVDQ.

The protein belongs to the TRAP-alpha family. In terms of assembly, heterotetramer of TRAP-alpha, TRAP-beta, TRAP-delta and TRAP-gamma. Post-translationally, phosphorylated in its cytoplasmic tail.

Its subcellular location is the endoplasmic reticulum membrane. TRAP proteins are part of a complex whose function is to bind calcium to the ER membrane and thereby regulate the retention of ER resident proteins. May be involved in the recycling of the translocation apparatus after completion of the translocation process or may function as a membrane-bound chaperone facilitating folding of translocated proteins. This Oncorhynchus mykiss (Rainbow trout) protein is Translocon-associated protein subunit alpha (ssr1).